The primary structure comprises 154 residues: NADPH-dependent 7-cyano-7-deazaguanine reductase (154 aa).

Residues M1 to Q11 are compositionally biased toward basic and acidic residues. The tract at residues M1 to P31 is disordered. C52 serves as the catalytic Thioimide intermediate. The active-site Proton donor is the D59. Residues I74–S76 and H93–E94 each bind substrate.

The protein belongs to the GTP cyclohydrolase I family. QueF type 1 subfamily.

It is found in the cytoplasm. The enzyme catalyses 7-aminomethyl-7-carbaguanine + 2 NADP(+) = 7-cyano-7-deazaguanine + 2 NADPH + 3 H(+). Its pathway is tRNA modification; tRNA-queuosine biosynthesis. Catalyzes the NADPH-dependent reduction of 7-cyano-7-deazaguanine (preQ0) to 7-aminomethyl-7-deazaguanine (preQ1). This is NADPH-dependent 7-cyano-7-deazaguanine reductase from Parvibaculum lavamentivorans (strain DS-1 / DSM 13023 / NCIMB 13966).